The sequence spans 249 residues: MAERGELDLTGAKQNTGVWLVKVPKYLSQQWAKASGRGEVGKLRIAKNQGRTEVSFTLNEDLANIHDIGGKPASVSAPREHPFVLQSVGGQTLTVFTESSSDKLSLEGIVVQRAECRPAASENYMKLKRLQIEESSKPVRLSQQLDKVVTTNYKPVANHQYNIEYERKKKEDGKRARADKQHVLDMLFSAFEKHQYYNLKDLVDITKQPVGYLKEILKEIGIQNVKGIHKNTWELKPEYRHYQTEEKSD.

Position 2 is an N-acetylalanine (Ala-2). N6-acetyllysine occurs at positions 22, 33, and 137. At Ser-142 the chain carries Phosphoserine. DNA-binding residues include Gly-227 and His-229. Residue Ser-248 is modified to Phosphoserine.

The protein belongs to the TFIIF beta subunit family. In terms of assembly, heterodimer of an alpha and a beta subunit. Interacts with HTATSF1 and URI1. Interacts with GPBP1. Interacts with GTF2B (via N-terminus); this interaction is inhibited in presence of GTF2F1. Part of TBP-based Pol II pre-initiation complex (PIC), in which Pol II core assembles with general transcription factors and other specific initiation factors including GTF2E1, GTF2E2, GTF2F1, GTF2F2, TCEA1, ERCC2, ERCC3, GTF2H2, GTF2H3, GTF2H4, GTF2H5, GTF2A1, GTF2A2, GTF2B and TBP; this large multi-subunit PIC complex mediates DNA unwinding and targets Pol II core to the transcription start site where the first phosphodiester bond forms.

The protein resides in the nucleus. Functionally, TFIIF is a general transcription initiation factor that binds to RNA polymerase II and helps to recruit it to the initiation complex in collaboration with TFIIB. The polypeptide is General transcription factor IIF subunit 2 (Gtf2f2) (Mus musculus (Mouse)).